We begin with the raw amino-acid sequence, 341 residues long: Killer cell immunoglobulin-like receptor 2DL3 (341 aa).

A signal peptide spans Met1–Pro21. The Extracellular segment spans residues His22–His245. Ig-like C2-type domains lie at Glu42–Ser107 and Gly142–Ser205. Disulfide bonds link Cys49–Cys100 and Cys149–Cys198. N-linked (GlcNAc...) asparagine glycans are attached at residues Asn84, Asn178, and Asn211. The tract at residues Val220–Gly239 is disordered. Positions Asn223–Gly239 are enriched in low complexity. Residues Val246–Leu265 form a helical membrane-spanning segment. Residues His266–Pro341 are Cytoplasmic-facing.

This sequence belongs to the immunoglobulin superfamily. As to quaternary structure, interacts with ARRB2.

It localises to the cell membrane. In terms of biological role, receptor on natural killer (NK) cells for HLA-C alleles (HLA-Cw1, HLA-Cw3 and HLA-Cw7). Inhibits the activity of NK cells thus preventing cell lysis. The protein is Killer cell immunoglobulin-like receptor 2DL3 of Homo sapiens (Human).